The sequence spans 329 residues: Neuropeptides B/W receptor type 1 (329 aa).

Topologically, residues 1 to 39 (MHNLSLFEPGRGNVSCGGPFLGCPNESNPAPLPLPQPLA) are extracellular. 3 N-linked (GlcNAc...) asparagine glycosylation sites follow: Asn-3, Asn-13, and Asn-25. Residues 40-63 (VAVPVVYGVICAVGLAGNSAVLYV) form a helical membrane-spanning segment. At 64–74 (LLRTPRMKTVT) the chain is on the cytoplasmic side. A helical membrane pass occupies residues 75–99 (NVFILNLAIADELFTLVLPINIADF). Over 100-114 (LLRRWPFGEVMCKLI) the chain is Extracellular. Cys-111 and Cys-190 are joined by a disulfide. A helical membrane pass occupies residues 115-134 (VAVDQYNTFSSLYFLAVMSA). Residues 135–159 (DRYLVVLATAESRRVSGRTYGAARA) lie on the Cytoplasmic side of the membrane. The helical transmembrane segment at 160 to 179 (VSLAVWALVTLVVLPFAVFA) threads the bilayer. The Extracellular portion of the chain corresponds to 180–204 (RLDEEQGRRQCVLVFPQPEAFWWRA). Residues 205–226 (SRLYTLVLGFAIPVSTICALYI) form a helical membrane-spanning segment. The Cytoplasmic segment spans residues 227-250 (TLLCRLRAIQLDSHAKALDRAKKR). Residues 251–275 (VTLLVVAILAVCLLCWTPYHLSTIV) form a helical membrane-spanning segment. Residues 276-285 (ALTTDLPQTP) are Extracellular-facing. The helical transmembrane segment at 286–300 (LVIGISYFITSLSYA) threads the bilayer. Topologically, residues 301-329 (NSCLNPFLYAFLDDSFRRSLRQLVSCRTA) are cytoplasmic.

It belongs to the G-protein coupled receptor 1 family.

It localises to the cell membrane. Functionally, interacts specifically with a number of opioid ligands. Receptor for neuropeptides B and W, which may be involved in neuroendocrine system regulation, food intake and the organization of other signals. The protein is Neuropeptides B/W receptor type 1 (Npbwr1) of Rattus norvegicus (Rat).